We begin with the raw amino-acid sequence, 117 residues long: Minor capsid protein p17 (117 aa).

An N-linked (GlcNAc...) asparagine; by host glycan is attached at asparagine 12. Residues 39–59 traverse the membrane as a helical segment; the sequence is AILLGILILLVIILIIVAIVY. The interval 96 to 117 is disordered; sequence KNSTSQQSHIPSDEQLAELAHS. A glycan (N-linked (GlcNAc...) asparagine; by host) is linked at asparagine 97.

The protein belongs to the asfivirus minor capsid protein p17 family. As to quaternary structure, interacts with the minor capsid protein M1249L and with the hexon capsid protein p72 capsomers; these interactions form a rigid zipper structure that stabilizes the capsomers. Interacts with host STING1.

Its subcellular location is the virion membrane. The protein localises to the host endoplasmic reticulum membrane. Its function is as follows. Together with the penton and the other minor capsid proteins (M1249L, p49), forms a complicated network immediately below the outer capsid shell, stabilizing the whole capsid. Three copies of p17 encircle each p72 capsomer in the inner capsid shell, anchoring p72 capsomers on the inner membrane. Required for the assembly of the capsid and icosahedral morphogenesis. Additionally, inhibits the host cGAS-STING pathway through its interaction with STING1 and subsequent interference of the recruitment of downstream components TBK1 and IKBKE. This chain is Minor capsid protein p17, found in African swine fever virus (isolate Tick/South Africa/Pretoriuskop Pr4/1996) (ASFV).